Consider the following 144-residue polypeptide: Large ribosomal subunit protein uL13 (144 aa).

Belongs to the universal ribosomal protein uL13 family. In terms of assembly, part of the 50S ribosomal subunit.

In terms of biological role, this protein is one of the early assembly proteins of the 50S ribosomal subunit, although it is not seen to bind rRNA by itself. It is important during the early stages of 50S assembly. This is Large ribosomal subunit protein uL13 from Mesomycoplasma hyopneumoniae (strain 7448) (Mycoplasma hyopneumoniae).